The sequence spans 109 residues: Peptide chaperone MftB (109 aa).

The protein belongs to the peptide chaperone MftB family.

Its function is as follows. Peptide chaperone involved in the biosynthesis of the enzyme cofactor mycofactocin (MFT). Binds MftA and MftC with high affinity, and is essential for MftC activity on MftA, likely via the formation of a ternary complex. The protein is Peptide chaperone MftB of Mycobacterium tuberculosis (strain ATCC 25618 / H37Rv).